Here is a 532-residue protein sequence, read N- to C-terminus: Probable C4-dicarboxylate sensor kinase (532 aa).

At 1-12 the chain is on the cytoplasmic side; the sequence is MRLFRQLSIQWK. Residues 13-33 form a helical membrane-spanning segment; that stretch reads ITILSFGIVAFALMMVSISLL. Residues 34-175 lie on the Extracellular side of the membrane; that stretch reads GYVTSIKEDE…YADMIQEFWQ (142 aa). Residues 176–196 traverse the membrane as a helical segment; it reads PALLIGLITALFGFWGSWLLA. Residues 197–532 lie on the Cytoplasmic side of the membrane; that stretch reads SHIKRQTFNM…FSIYLPKKRG (336 aa). Residues 216-279 enclose the PAS domain; sequence VERDASFNAI…PEILSIGKPL (64 aa). The 217-residue stretch at 315 to 531 folds into the Histidine kinase domain; sequence SDVDRLAEEL…TFSIYLPKKR (217 aa). H339 carries the phosphohistidine; by autocatalysis modification.

The protein localises to the cell membrane. It catalyses the reaction ATP + protein L-histidine = ADP + protein N-phospho-L-histidine.. Member of the two-component regulatory system DctS/DctR. Probably activates DctR by phosphorylation. Essential for expression of dctP. In Halalkalibacterium halodurans (strain ATCC BAA-125 / DSM 18197 / FERM 7344 / JCM 9153 / C-125) (Bacillus halodurans), this protein is Probable C4-dicarboxylate sensor kinase (dctS).